Consider the following 413-residue polypeptide: Palmitoyltransferase ZDHHC6 (413 aa).

At M1–P24 the chain is on the cytoplasmic side. A helical transmembrane segment spans residues I25 to W45. Residues Y46–N57 are Lumenal-facing. The helical transmembrane segment at F58–A78 threads the bilayer. Residues G79–S143 are Cytoplasmic-facing. Positions Q99–L149 constitute a DHHC domain. The active-site S-palmitoyl cysteine intermediate is the C129. The helical transmembrane segment at F144–M164 threads the bilayer. The Lumenal segment spans residues T165–P194. The chain crosses the membrane as a helical span at residues I195–G215. Residues T216–R413 are Cytoplasmic-facing. Residues V313–C398 form the SH3 domain. S-palmitoyl cysteine attachment occurs at residues C328, C329, and C343. A Di-lysine motif motif is present at residues K410–R413.

It belongs to the DHHC palmitoyltransferase family. In terms of assembly, homooligomerizes. Interacts with SELENOK. Palmitoylated at 3 different sites by ZDHHC16. The combination of the different palmitoylation events strongly affects the quaternary assembly of ZDHHC6, its localization, stability and function. Palmitoylation at Cys-328 accelerates the turnover of ZDHHC6. Depalmitoylated by LYPLA2.

It localises to the endoplasmic reticulum membrane. The catalysed reaction is L-cysteinyl-[protein] + hexadecanoyl-CoA = S-hexadecanoyl-L-cysteinyl-[protein] + CoA. The enzyme catalyses L-cysteinyl-[protein] + octadecanoyl-CoA = S-octadecanoyl-L-cysteinyl-[protein] + CoA. Functionally, endoplasmic reticulum palmitoyl acyltransferase that mediates palmitoylation of proteins such as AMFR, CALX, ITPR1 and TFRC. Palmitoylates calnexin (CALX), which is required for its association with the ribosome-translocon complex and efficient folding of glycosylated proteins. Mediates palmitoylation of AMFR, promoting AMFR distribution to the peripheral endoplasmic reticulum. Together with SELENOK, palmitoylates ITPR1 in immune cells, leading to regulate ITPR1 stability and function. Stearoyltransferase that mediates stearoylation of TFRC to inhibit TFRC-mediated activation of the JNK pathway and mitochondrial fragmentation. The chain is Palmitoyltransferase ZDHHC6 from Mus musculus (Mouse).